We begin with the raw amino-acid sequence, 126 residues long: Fluoride-specific ion channel FluC (126 aa).

Transmembrane regions (helical) follow at residues 4–24 (LLLVCLGGALGSGARYLTSAW), 36–56 (GTLLVNVSGSFLLAGIMTASL), 67–85 (LFLAAGVMGGFTTYSSFNY), and 101–121 (AYLLATVVGCLVAAFAATLLV). Na(+) contacts are provided by Gly-75 and Thr-78.

Belongs to the fluoride channel Fluc/FEX (TC 1.A.43) family.

The protein localises to the cell inner membrane. It catalyses the reaction fluoride(in) = fluoride(out). Na(+) is not transported, but it plays an essential structural role and its presence is essential for fluoride channel function. Its function is as follows. Fluoride-specific ion channel. Important for reducing fluoride concentration in the cell, thus reducing its toxicity. In Anaeromyxobacter sp. (strain K), this protein is Fluoride-specific ion channel FluC.